Here is a 462-residue protein sequence, read N- to C-terminus: Syringate O-demethylase (462 aa).

Belongs to the GcvT family.

It carries out the reaction syringate + (6S)-5,6,7,8-tetrahydrofolate = 3-O-methylgallate + (6S)-5-methyl-5,6,7,8-tetrahydrofolate. It functions in the pathway secondary metabolite metabolism; lignin degradation. Involved in the catabolism of syringate. Catalyzes the conversion of syringate to 3-O-methylgallate (3MGA) in the presence of tetrahydrofolate. Has weak activity with vanillate and 3-O-methylgallate. This is Syringate O-demethylase from Sphingobium sp. (strain NBRC 103272 / SYK-6).